The sequence spans 144 residues: Nucleoside diphosphate kinase (144 aa).

ATP is bound by residues Lys-9, Phe-57, Arg-85, Thr-91, Arg-102, and Asn-112. The Pros-phosphohistidine intermediate role is filled by His-120.

It belongs to the NDK family. As to quaternary structure, homotetramer. Mg(2+) is required as a cofactor.

The protein resides in the cytoplasm. It catalyses the reaction a 2'-deoxyribonucleoside 5'-diphosphate + ATP = a 2'-deoxyribonucleoside 5'-triphosphate + ADP. The catalysed reaction is a ribonucleoside 5'-diphosphate + ATP = a ribonucleoside 5'-triphosphate + ADP. Its function is as follows. Major role in the synthesis of nucleoside triphosphates other than ATP. The ATP gamma phosphate is transferred to the NDP beta phosphate via a ping-pong mechanism, using a phosphorylated active-site intermediate. This Streptococcus uberis (strain ATCC BAA-854 / 0140J) protein is Nucleoside diphosphate kinase.